The sequence spans 414 residues: Esterase FrsA (414 aa).

It belongs to the FrsA family.

The enzyme catalyses a carboxylic ester + H2O = an alcohol + a carboxylate + H(+). Functionally, catalyzes the hydrolysis of esters. This chain is Esterase FrsA, found in Escherichia coli O139:H28 (strain E24377A / ETEC).